The following is a 430-amino-acid chain: Enolase (430 aa).

Position 163 (Gln-163) interacts with (2R)-2-phosphoglycerate. Glu-205 acts as the Proton donor in catalysis. Asp-242, Glu-286, and Asp-313 together coordinate Mg(2+). Positions 338, 367, 368, and 389 each coordinate (2R)-2-phosphoglycerate. Lys-338 (proton acceptor) is an active-site residue.

This sequence belongs to the enolase family. It depends on Mg(2+) as a cofactor.

It is found in the cytoplasm. The protein localises to the secreted. Its subcellular location is the cell surface. The catalysed reaction is (2R)-2-phosphoglycerate = phosphoenolpyruvate + H2O. The protein operates within carbohydrate degradation; glycolysis; pyruvate from D-glyceraldehyde 3-phosphate: step 4/5. Its function is as follows. Catalyzes the reversible conversion of 2-phosphoglycerate (2-PG) into phosphoenolpyruvate (PEP). It is essential for the degradation of carbohydrates via glycolysis. The sequence is that of Enolase from Symbiobacterium thermophilum (strain DSM 24528 / JCM 14929 / IAM 14863 / T).